The following is a 485-amino-acid chain: MISLTTLDLLLSINEGEMIEEIILTLLASPQLAIFFEKHPRLKRALLKDIPGWKHDLQQRIKEALIPVTLAEEFQLYQQILSANTNYFYLKLPDILETLNRIESPFSEEAQKLATNTIADSNTLQTLFIQRWRISLILQTTTFHKQLLEQEKEQLLAELQQKLTLSGNLDPVFSENDRAAGRLWDMSKSQLNHSQNDKQLLIHYSEFLHQQPELKKLAQLLGRSQSVKSKPQENHFFEPVTTIERTPDIIPEQVNGIGQSDDILRLLPIELAILGIEDLEYEFYRKLVEKKLLTYRLQGDNWREKTTLQPVTHYSQEEKPQGPFIICVDTSGSMGKFNEKCAKAFCLALLRIALADNRNCHIMLFTTGIVHYELSSPDGLEQATRFLSQTFKGGTDLAFCLTSTIEKMKEKCWKNADAVVISDFIAQRLPNSLIHQIKNLQLHQQYRFHAVSMSQYGKPDIMRIFDHIWHFDTGLKSRLLRKWRH.

This sequence belongs to the ViaA family. Homodimer. Interacts with RavA.

It is found in the cytoplasm. Functionally, component of the RavA-ViaA chaperone complex, which may act on the membrane to optimize the function of some of the respiratory chains. ViaA stimulates the ATPase activity of RavA. In Photorhabdus laumondii subsp. laumondii (strain DSM 15139 / CIP 105565 / TT01) (Photorhabdus luminescens subsp. laumondii), this protein is Regulatory protein ViaA.